The sequence spans 94 residues: Small ribosomal subunit protein uS17 (94 aa).

The protein belongs to the universal ribosomal protein uS17 family. Part of the 30S ribosomal subunit.

One of the primary rRNA binding proteins, it binds specifically to the 5'-end of 16S ribosomal RNA. In Deinococcus geothermalis (strain DSM 11300 / CIP 105573 / AG-3a), this protein is Small ribosomal subunit protein uS17.